The primary structure comprises 298 residues: Spermidine synthase (298 aa).

A PABS domain is found at D13–K248. S-adenosyl 3-(methylsulfanyl)propylamine is bound at residue Q44. Y74 contributes to the putrescine binding site. S-adenosyl 3-(methylsulfanyl)propylamine is bound by residues Q75, D99, D119, D150–G151, and D168. The active-site Proton acceptor is the D168. Putrescine is bound by residues D168–D171 and Y236.

This sequence belongs to the spermidine/spermine synthase family.

It carries out the reaction S-adenosyl 3-(methylsulfanyl)propylamine + putrescine = S-methyl-5'-thioadenosine + spermidine + H(+). The protein operates within amine and polyamine biosynthesis; spermidine biosynthesis; spermidine from putrescine: step 1/1. The sequence is that of Spermidine synthase from Schizosaccharomyces pombe (strain 972 / ATCC 24843) (Fission yeast).